Reading from the N-terminus, the 153-residue chain is Prefoldin subunit alpha (153 aa).

The protein belongs to the prefoldin subunit alpha family. As to quaternary structure, heterohexamer of two alpha and four beta subunits.

Its subcellular location is the cytoplasm. In terms of biological role, molecular chaperone capable of stabilizing a range of proteins. Seems to fulfill an ATP-independent, HSP70-like function in archaeal de novo protein folding. The protein is Prefoldin subunit alpha of Methanothrix thermoacetophila (strain DSM 6194 / JCM 14653 / NBRC 101360 / PT) (Methanosaeta thermophila).